We begin with the raw amino-acid sequence, 126 residues long: Large ribosomal subunit protein bL12 (126 aa).

This sequence belongs to the bacterial ribosomal protein bL12 family. As to quaternary structure, homodimer. Part of the ribosomal stalk of the 50S ribosomal subunit. Forms a multimeric L10(L12)X complex, where L10 forms an elongated spine to which 2 to 4 L12 dimers bind in a sequential fashion. Binds GTP-bound translation factors.

Forms part of the ribosomal stalk which helps the ribosome interact with GTP-bound translation factors. Is thus essential for accurate translation. This Methylobacterium nodulans (strain LMG 21967 / CNCM I-2342 / ORS 2060) protein is Large ribosomal subunit protein bL12.